Consider the following 213-residue polypeptide: Cell division protein SepF (213 aa).

The tract at residues 27-103 is disordered; it reads VDAPAPRRAP…GSLRGSAPTR (77 aa). 2 stretches are compositionally biased toward basic and acidic residues: residues 35–51 and 72–90; these read APVEDRRYPRRGERFAD and DEDRFVSRHAPSREFDRPA.

Belongs to the SepF family. In terms of assembly, homodimer. Interacts with FtsZ.

The protein localises to the cytoplasm. Cell division protein that is part of the divisome complex and is recruited early to the Z-ring. Probably stimulates Z-ring formation, perhaps through the cross-linking of FtsZ protofilaments. Its function overlaps with FtsA. This chain is Cell division protein SepF, found in Mycobacteroides abscessus (strain ATCC 19977 / DSM 44196 / CCUG 20993 / CIP 104536 / JCM 13569 / NCTC 13031 / TMC 1543 / L948) (Mycobacterium abscessus).